Here is a 166-residue protein sequence, read N- to C-terminus: Large ribosomal subunit protein uL10 (166 aa).

Belongs to the universal ribosomal protein uL10 family. In terms of assembly, part of the ribosomal stalk of the 50S ribosomal subunit. The N-terminus interacts with L11 and the large rRNA to form the base of the stalk. The C-terminus forms an elongated spine to which L12 dimers bind in a sequential fashion forming a multimeric L10(L12)X complex.

Its function is as follows. Forms part of the ribosomal stalk, playing a central role in the interaction of the ribosome with GTP-bound translation factors. The protein is Large ribosomal subunit protein uL10 (rplJ) of Streptococcus pyogenes serotype M18 (strain MGAS8232).